We begin with the raw amino-acid sequence, 154 residues long: Myoglobin (154 aa).

The Globin domain occupies 2–148 (GLSDGEWQLV…FRNDMATKYK (147 aa)). The residue at position 4 (S4) is a Phosphoserine. Nitrite is bound at residue H65. Residue H65 participates in O2 binding. H94 contacts heme b.

Belongs to the globin family. In terms of assembly, monomeric.

It is found in the cytoplasm. It localises to the sarcoplasm. It carries out the reaction Fe(III)-heme b-[protein] + nitric oxide + H2O = Fe(II)-heme b-[protein] + nitrite + 2 H(+). The enzyme catalyses H2O2 + AH2 = A + 2 H2O. Its function is as follows. Monomeric heme protein which primary function is to store oxygen and facilitate its diffusion within muscle tissues. Reversibly binds oxygen through a pentacoordinated heme iron and enables its timely and efficient release as needed during periods of heightened demand. Depending on the oxidative conditions of tissues and cells, and in addition to its ability to bind oxygen, it also has a nitrite reductase activity whereby it regulates the production of bioactive nitric oxide. Under stress conditions, like hypoxia and anoxia, it also protects cells against reactive oxygen species thanks to its pseudoperoxidase activity. The protein is Myoglobin (MB) of Tachyglossus aculeatus aculeatus (Southeast Australian short-beaked echidna).